Here is a 413-residue protein sequence, read N- to C-terminus: Probable isoleucine--tRNA ligase, mitochondrial (413 aa).

A 'KMSKS' region motif is present at residues 298–302 (KMSKS). Lys-301 is a binding site for ATP.

This sequence belongs to the class-I aminoacyl-tRNA synthetase family.

The protein localises to the mitochondrion matrix. It carries out the reaction tRNA(Ile) + L-isoleucine + ATP = L-isoleucyl-tRNA(Ile) + AMP + diphosphate. This chain is Probable isoleucine--tRNA ligase, mitochondrial, found in Ciona intestinalis (Transparent sea squirt).